We begin with the raw amino-acid sequence, 300 residues long: Actin-related protein 2/3 complex subunit 2 (300 aa).

An N6-acetyllysine mark is found at Lys275 and Lys295.

The protein belongs to the ARPC2 family. Component of the Arp2/3 complex composed of ACTR2/ARP2, ACTR3/ARP3, ARPC1B/p41-ARC, ARPC2/p34-ARC, ARPC3/p21-ARC, ARPC4/p20-ARC and ARPC5/p16-ARC. Interacts with SHANK3; the interaction probably mediates the association of SHANK3 with the Arp2/3 complex.

It localises to the cytoplasm. It is found in the cytoskeleton. Its subcellular location is the cell projection. The protein resides in the synapse. The protein localises to the synaptosome. It localises to the nucleus. In terms of biological role, actin-binding component of the Arp2/3 complex, a multiprotein complex that mediates actin polymerization upon stimulation by nucleation-promoting factor (NPF). The Arp2/3 complex mediates the formation of branched actin networks in the cytoplasm, providing the force for cell motility. Seems to contact the mother actin filament. In addition to its role in the cytoplasmic cytoskeleton, the Arp2/3 complex also promotes actin polymerization in the nucleus, thereby regulating gene transcription and repair of damaged DNA. The Arp2/3 complex promotes homologous recombination (HR) repair in response to DNA damage by promoting nuclear actin polymerization, leading to drive motility of double-strand breaks (DSBs). The chain is Actin-related protein 2/3 complex subunit 2 from Rattus norvegicus (Rat).